A 360-amino-acid polypeptide reads, in one-letter code: Phospho-N-acetylmuramoyl-pentapeptide-transferase (360 aa).

Transmembrane regions (helical) follow at residues Leu2 to Leu22, Ala26 to Arg46, Thr73 to Leu93, Tyr97 to Trp117, Tyr134 to Leu154, Ile168 to Ser188, Gly199 to Ser219, Thr236 to Phe256, Val263 to Ile283, Leu288 to Val308, and Ile339 to Ile359.

It belongs to the glycosyltransferase 4 family. MraY subfamily. Mg(2+) serves as cofactor.

It localises to the cell inner membrane. The catalysed reaction is UDP-N-acetyl-alpha-D-muramoyl-L-alanyl-gamma-D-glutamyl-meso-2,6-diaminopimeloyl-D-alanyl-D-alanine + di-trans,octa-cis-undecaprenyl phosphate = di-trans,octa-cis-undecaprenyl diphospho-N-acetyl-alpha-D-muramoyl-L-alanyl-D-glutamyl-meso-2,6-diaminopimeloyl-D-alanyl-D-alanine + UMP. The protein operates within cell wall biogenesis; peptidoglycan biosynthesis. In terms of biological role, catalyzes the initial step of the lipid cycle reactions in the biosynthesis of the cell wall peptidoglycan: transfers peptidoglycan precursor phospho-MurNAc-pentapeptide from UDP-MurNAc-pentapeptide onto the lipid carrier undecaprenyl phosphate, yielding undecaprenyl-pyrophosphoryl-MurNAc-pentapeptide, known as lipid I. The protein is Phospho-N-acetylmuramoyl-pentapeptide-transferase of Hahella chejuensis (strain KCTC 2396).